We begin with the raw amino-acid sequence, 248 residues long: Anamorsin homolog (248 aa).

An N-terminal SAM-like domain region spans residues 4–129 (FKGLQKSLYI…ETGSSARLSF (126 aa)). Positions 130–161 (AKKNANAANVWKISGDDEELIDEEELLDEEDK) are linker. 4 residues coordinate [2Fe-2S] cluster: cysteine 172, cysteine 181, cysteine 184, and cysteine 186. The tract at residues 172–186 (CSTTGKRKACKNCSC) is fe-S binding site A. [4Fe-4S] cluster is bound by residues cysteine 209, cysteine 212, cysteine 220, and cysteine 223. 2 short sequence motifs (cx2C motif) span residues 209-212 (CGNC) and 220-223 (CSTC). A fe-S binding site B region spans residues 209–223 (CGNCYLGDAFRCSTC).

It belongs to the anamorsin family. In terms of assembly, monomer. Requires [2Fe-2S] cluster as cofactor. [4Fe-4S] cluster serves as cofactor.

It is found in the cytoplasm. Its subcellular location is the mitochondrion intermembrane space. Functionally, component of the cytosolic iron-sulfur (Fe-S) protein assembly (CIA) machinery. Required for the maturation of extramitochondrial Fe-S proteins. Part of an electron transfer chain functioning in an early step of cytosolic Fe-S biogenesis, facilitating the de novo assembly of a [4Fe-4S] cluster on the cytosolic Fe-S scaffold complex. Electrons are transferred from NADPH via a FAD- and FMN-containing diflavin oxidoreductase. Together with the diflavin oxidoreductase, also required for the assembly of the diferric tyrosyl radical cofactor of ribonucleotide reductase (RNR), probably by providing electrons for reduction during radical cofactor maturation in the catalytic small subunit. The sequence is that of Anamorsin homolog from Drosophila sechellia (Fruit fly).